Here is a 106-residue protein sequence, read N- to C-terminus: Urease subunit beta (106 aa).

This sequence belongs to the urease beta subunit family. As to quaternary structure, heterotrimer of UreA (gamma), UreB (beta) and UreC (alpha) subunits. Three heterotrimers associate to form the active enzyme.

Its subcellular location is the cytoplasm. It carries out the reaction urea + 2 H2O + H(+) = hydrogencarbonate + 2 NH4(+). The protein operates within nitrogen metabolism; urea degradation; CO(2) and NH(3) from urea (urease route): step 1/1. This Parasynechococcus marenigrum (strain WH8102) protein is Urease subunit beta.